Here is a 224-residue protein sequence, read N- to C-terminus: Thiamine-phosphate synthase (224 aa).

4-amino-2-methyl-5-(diphosphooxymethyl)pyrimidine contacts are provided by residues 44–48 and Asn79; that span reads QFREK. Positions 80 and 99 each coordinate Mg(2+). Ser117 is a binding site for 4-amino-2-methyl-5-(diphosphooxymethyl)pyrimidine. 143–145 serves as a coordination point for 2-[(2R,5Z)-2-carboxy-4-methylthiazol-5(2H)-ylidene]ethyl phosphate; sequence TST. Lys146 is a binding site for 4-amino-2-methyl-5-(diphosphooxymethyl)pyrimidine. Residues Gly175 and 195–196 contribute to the 2-[(2R,5Z)-2-carboxy-4-methylthiazol-5(2H)-ylidene]ethyl phosphate site; that span reads IS.

The protein belongs to the thiamine-phosphate synthase family. It depends on Mg(2+) as a cofactor.

It carries out the reaction 2-[(2R,5Z)-2-carboxy-4-methylthiazol-5(2H)-ylidene]ethyl phosphate + 4-amino-2-methyl-5-(diphosphooxymethyl)pyrimidine + 2 H(+) = thiamine phosphate + CO2 + diphosphate. The enzyme catalyses 2-(2-carboxy-4-methylthiazol-5-yl)ethyl phosphate + 4-amino-2-methyl-5-(diphosphooxymethyl)pyrimidine + 2 H(+) = thiamine phosphate + CO2 + diphosphate. The catalysed reaction is 4-methyl-5-(2-phosphooxyethyl)-thiazole + 4-amino-2-methyl-5-(diphosphooxymethyl)pyrimidine + H(+) = thiamine phosphate + diphosphate. It participates in cofactor biosynthesis; thiamine diphosphate biosynthesis; thiamine phosphate from 4-amino-2-methyl-5-diphosphomethylpyrimidine and 4-methyl-5-(2-phosphoethyl)-thiazole: step 1/1. Its function is as follows. Condenses 4-methyl-5-(beta-hydroxyethyl)thiazole monophosphate (THZ-P) and 2-methyl-4-amino-5-hydroxymethyl pyrimidine pyrophosphate (HMP-PP) to form thiamine monophosphate (TMP). This Bacillus cereus (strain ATCC 10987 / NRS 248) protein is Thiamine-phosphate synthase.